Consider the following 293-residue polypeptide: Vibriobactin-specific isochorismatase (293 aa).

The 77-residue stretch at K211–L287 folds into the Carrier domain. An O-(pantetheine 4'-phosphoryl)serine modification is found at S248.

Belongs to the isochorismatase family. It depends on pantetheine 4'-phosphate as a cofactor.

The catalysed reaction is isochorismate + H2O = (2S,3S)-2,3-dihydroxy-2,3-dihydrobenzoate + pyruvate. It participates in siderophore biosynthesis; vibriobactin biosynthesis. Functionally, involved in the biosynthesis of the catechol siderophore vibriobactin. Vibriobactin is a chelating compound involved in transporting iron from the bacterial environment into the cell cytoplasm. This chain is Vibriobactin-specific isochorismatase (vibB), found in Vibrio cholerae serotype O1 (strain ATCC 39541 / Classical Ogawa 395 / O395).